We begin with the raw amino-acid sequence, 354 residues long: Fructose-bisphosphate aldolase 2 (354 aa).

Ser-50 serves as a coordination point for D-glyceraldehyde 3-phosphate. Asp-83 serves as the catalytic Proton donor. Zn(2+) is bound by residues His-84, Asp-105, Glu-142, and His-198. Gly-199 serves as a coordination point for dihydroxyacetone phosphate. Zn(2+) is bound at residue His-232. Dihydroxyacetone phosphate-binding positions include 233 to 235 (GSS) and 275 to 278 (NIDT).

The protein belongs to the class II fructose-bisphosphate aldolase family. As to quaternary structure, homodimer. The cofactor is Zn(2+).

It carries out the reaction beta-D-fructose 1,6-bisphosphate = D-glyceraldehyde 3-phosphate + dihydroxyacetone phosphate. Its pathway is carbohydrate biosynthesis; Calvin cycle. It participates in carbohydrate degradation; glycolysis; D-glyceraldehyde 3-phosphate and glycerone phosphate from D-glucose: step 4/4. Functionally, catalyzes the aldol condensation of dihydroxyacetone phosphate (DHAP or glycerone-phosphate) with glyceraldehyde 3-phosphate (G3P) to form fructose 1,6-bisphosphate (FBP) in gluconeogenesis and the reverse reaction in glycolysis. This chain is Fructose-bisphosphate aldolase 2 (cfxB), found in Cereibacter sphaeroides (Rhodobacter sphaeroides).